A 475-amino-acid polypeptide reads, in one-letter code: UDP-N-acetylmuramate--L-alanine ligase (475 aa).

An ATP-binding site is contributed by 114-120 (GTHGKTT).

This sequence belongs to the MurCDEF family.

The protein localises to the cytoplasm. The enzyme catalyses UDP-N-acetyl-alpha-D-muramate + L-alanine + ATP = UDP-N-acetyl-alpha-D-muramoyl-L-alanine + ADP + phosphate + H(+). It participates in cell wall biogenesis; peptidoglycan biosynthesis. Its function is as follows. Cell wall formation. The protein is UDP-N-acetylmuramate--L-alanine ligase of Bartonella bacilliformis (strain ATCC 35685 / KC583 / Herrer 020/F12,63).